Reading from the N-terminus, the 207-residue chain is HTH-type transcriptional regulator BetI 2 (207 aa).

Residues 8–68 form the HTH tetR-type domain; the sequence is PIRRQQLIKA…ATMRQILTDL (61 aa). Positions 31 to 50 form a DNA-binding region, H-T-H motif; it reads TVMRIARHAGVSAGIISHYF.

Its pathway is amine and polyamine biosynthesis; betaine biosynthesis via choline pathway [regulation]. Functionally, repressor involved in the biosynthesis of the osmoprotectant glycine betaine. It represses transcription of the choline transporter BetT and the genes of BetAB involved in the synthesis of glycine betaine. The chain is HTH-type transcriptional regulator BetI 2 from Chromohalobacter salexigens (strain ATCC BAA-138 / DSM 3043 / CIP 106854 / NCIMB 13768 / 1H11).